Reading from the N-terminus, the 317-residue chain is MASVIPASNRSMRSDRNTYVGKRFVHVKNPYLDLMDEDILYHLDLGTKTHNLPAMFGDVKFVCVGGSPNRMKAFALFMHKELGFEEAEEDIKDICAGTDRYCMYKTGPVLAISHGMGIPSISIMLHELIKLLHHARCCDVTIIRIGTSGGIGIAPGTVVITDIAVDSFFKPRFEQVILDNIVTRSTELDKELSEELFNCSKEIPNFPTLVGHTMCTYDFYEGQGRLDGALCSFSREKKLDYLKRAFKAGVRNIEMESTVFAAMCGLCGLKAAVVCVTLLDRLDCDQINLPHDVLVEYQQRPQLLISNFIRRRLGLCD.

Phosphate contacts are provided by residues G66, R100, and 144-147; that span reads RIGT. C95 and C102 form a disulfide bridge. Residues 148–149 and 223–225 contribute to the uridine site; these read SG and QGR.

It belongs to the PNP/UDP phosphorylase family. Homodimer. In terms of tissue distribution, predominantly expressed in kidney.

It carries out the reaction uridine + phosphate = alpha-D-ribose 1-phosphate + uracil. It catalyses the reaction 2'-deoxyuridine + phosphate = 2-deoxy-alpha-D-ribose 1-phosphate + uracil. It participates in pyrimidine metabolism; UMP biosynthesis via salvage pathway; uracil from uridine (phosphorylase route): step 1/1. With respect to regulation, a conditional disulfide bridge can form within the protein that dislocates a critical phosphate-coordinating arginine Arg-100 away from the active site, disabling the enzyme. Functionally, catalyzes the reversible phosphorylytic cleavage of uridine to uracil and ribose-1-phosphate which can then be utilized as carbon and energy sources or in the rescue of pyrimidine bases for nucleotide synthesis. Shows broad substrate specificity and can also accept deoxyuridine and other analogous compounds. The chain is Uridine phosphorylase 2 from Homo sapiens (Human).